The following is a 411-amino-acid chain: Dipeptidase 1 (411 aa).

A signal peptide spans 1-16 (MWSGWWLWPLVAVCTA). H36 and D38 together coordinate Zn(2+). N57 carries an N-linked (GlcNAc...) asparagine glycan. Residues C87 and C170 are joined by a disulfide bond. E141 is a Zn(2+) binding site. H168 is a substrate binding site. Residues H214 and H235 each contribute to the Zn(2+) site. A disulfide bridge links C242 with C274. R246 lines the substrate pocket. N279 carries an N-linked (GlcNAc...) asparagine glycan. Residue D304 participates in substrate binding. Residues N332 and N358 are each glycosylated (N-linked (GlcNAc...) asparagine). S385 is lipidated: GPI-anchor amidated serine. The propeptide at 386 to 411 (GASSLHRHWGLLLASLAPLVLCLSLL) is removed in mature form.

Belongs to the metallo-dependent hydrolases superfamily. Peptidase M19 family. As to quaternary structure, homodimer; disulfide-linked. Zn(2+) is required as a cofactor. As to expression, expressed in lung and kidneys.

It localises to the apical cell membrane. It is found in the cell projection. Its subcellular location is the microvillus membrane. It carries out the reaction an L-aminoacyl-L-amino acid + H2O = 2 an L-alpha-amino acid. The catalysed reaction is leukotriene D4 + H2O = leukotriene E4 + glycine. It catalyses the reaction a beta-lactam + H2O = a substituted beta-amino acid. The enzyme catalyses L-cystine-bis-glycine + 2 H2O = L-cystine + 2 glycine. It carries out the reaction glycyldehydrophenylalanine + H2O = 2,3-didehydrophenylalanine + glycine. With respect to regulation, inhibited by L-penicillamine. Beta-lactamase activity is inhibited by cilastatin. Hydrolyzes a wide range of dipeptides including the conversion of leukotriene D4 to leukotriene E4. Hydrolyzes cystinyl-bis-glycine (cys-bis-gly) formed during glutathione degradation. Also possesses beta lactamase activity and can hydrolyze the beta-lactam antibiotic imipenem. Functionally, independently of its dipeptidase activity, acts as an adhesion receptor for neutrophil recruitment from bloodstream into inflamed lungs and liver. The polypeptide is Dipeptidase 1 (DPEP1) (Homo sapiens (Human)).